Consider the following 289-residue polypeptide: Cyclin-dependent kinase inhibitor 4 (289 aa).

Disordered regions lie at residues 1–31 (MGKY…ESSI), 56–160 (LQQQ…VSES), and 227–248 (SESN…TTPE). Gly residues predominate over residues 13 to 28 (AGAGAGGGGGGGGGGE). A compositionally biased stretch (low complexity) spans 56 to 80 (LQQQQQRCLLQKPSSPSSLPPTSAS). The span at 134 to 144 (CGRNPNPRSNL) shows a compositional bias: polar residues.

The protein belongs to the CDI family. ICK/KRP subfamily. As to quaternary structure, specifically interacts with CDKA-1, but not with CDKB1-1. Interacts with CYCD4-1. Binds to FBL17. As to expression, expressed in leaves and flowers and at lower levels in roots.

The protein resides in the nucleus. Its subcellular location is the nucleoplasm. Binds and inhibits CYCD2-1/CDKA-1 complex kinase activity. May target specifically CDKA-1. The polypeptide is Cyclin-dependent kinase inhibitor 4 (KRP4) (Arabidopsis thaliana (Mouse-ear cress)).